The sequence spans 491 residues: Ribonuclease Y (491 aa).

A helical transmembrane segment spans residues 4 to 24; it reads LIATVGVVAVAALVIAIFVVI. In terms of domain architecture, KH spans 181–247; the sequence is VVSVVHLPGD…RVALERLVDD (67 aa). Residues 307 to 400 form the HD domain; sequence VLKHLVETAH…TQAADAISGG (94 aa).

The protein belongs to the RNase Y family.

The protein resides in the cell membrane. In terms of biological role, endoribonuclease that initiates mRNA decay. The sequence is that of Ribonuclease Y from Acidothermus cellulolyticus (strain ATCC 43068 / DSM 8971 / 11B).